A 207-amino-acid polypeptide reads, in one-letter code: MTSRKKVLLKVIILGDSGVGKTSLMNQYVNKKFSNQYKATIGADFLTKEVMVDDRLVTMQIWDTAGQERFQSLGVAFYRGADCCVLVFDVTAPNTFKTLDSWRDEFLIQASPRDPENFPFVVLGNKIDLENRQVATKRAQAWCYSKNNIPYFETSAKEAINVEQAFQTIARNALKQETEVELYNEFPEPIKLDKNDRAKASAESCSC.

An N-acetylthreonine modification is found at Thr-2. GTP-binding residues include Ser-17, Gly-18, Val-19, Gly-20, Lys-21, Thr-22, Ser-23, Ser-34, Asn-35, Tyr-37, and Thr-40. Thr-22 contacts Mg(2+). The short motif at Tyr-28–Ile-41 is the Switch 1 element. Positions 40 and 63 each coordinate Mg(2+). A GTP-binding site is contributed by Gly-66. A Switch 2 motif is present at residues Gln-67 to Asp-82. Residue Ser-72 is modified to Phosphoserine. Residues Asn-125, Lys-126, Asp-128, Ala-156, and Lys-157 each coordinate GTP. Residues Lys-191 and Lys-194 each participate in a glycyl lysine isopeptide (Lys-Gly) (interchain with G-Cter in ubiquitin) cross-link. 2 S-geranylgeranyl cysteine lipidation sites follow: Cys-205 and Cys-207. A Cysteine methyl ester modification is found at Cys-207.

Belongs to the small GTPase superfamily. Rab family. In terms of assembly, interacts with NTRK1/TRKA, RILP, PSMA7, RNF115 and FYCO1. Interacts with the PIK3C3/VPS34-PIK3R4 complex. The GTP-bound form interacts with OSBPL1A and RAC1. Interacts with CLN3. Interacts with CHM, the substrate-binding subunit of the Rab geranylgeranyltransferase complex. Interacts with C9orf72. Does not interact with HPS4 and the BLOC-3 complex (heterodimer of HPS1 and HPS4). Interacts with CLN5. Interacts with PLEKHM1 (via N- and C-terminus). Interacts with PRPH; the interaction is direct. Interacts with VPS13A. The GDP-bound form interacts with RIMOC1. Interacts with the MON1A-CCZ1B complex and this interaction is enhanced in the presence of RIMOC1. Interacts with VPS39 and VPS41. Forms a ternary complex with LAMP2 and RUFY4; the interaction with LAMP2 is mediated by RUFY4 (via RUN and coiled coil domains). Requires Mg(2+) as cofactor. Deubiquitination at Lys-191 and Lys-194 by USP32. Post-translationally, phosphorylated at Ser-72 by LRRK1; phosphorylation is dependent on protein kinase C (PKC) activation of LRRK1. In terms of processing, prenylated. Prenylation is required for association with cellular membranes. As to expression, widely expressed. High expression in liver, heart and kidney. Found in sensory and motor neurons.

It localises to the cytoplasmic vesicle. Its subcellular location is the phagosome membrane. The protein localises to the late endosome membrane. The protein resides in the lysosome membrane. It is found in the melanosome membrane. It localises to the autophagosome membrane. Its subcellular location is the lipid droplet. The protein localises to the endosome membrane. The protein resides in the mitochondrion membrane. It catalyses the reaction GTP + H2O = GDP + phosphate + H(+). Regulated by guanine nucleotide exchange factors (GEFs) which promote the exchange of bound GDP for free GTP. Regulated by GTPase activating proteins (GAPs) which increase the GTP hydrolysis activity. Inhibited by GDP dissociation inhibitors (GDIs). In terms of biological role, the small GTPases Rab are key regulators of intracellular membrane trafficking, from the formation of transport vesicles to their fusion with membranes. Rabs cycle between an inactive GDP-bound form and an active GTP-bound form that is able to recruit to membranes different sets of downstream effectors directly responsible for vesicle formation, movement, tethering and fusion. In its active state, RAB7A binds to a variety of effector proteins playing a key role in the regulation of endo-lysosomal trafficking. Governs early-to-late endosomal maturation, microtubule minus-end as well as plus-end directed endosomal migration and positioning, and endosome-lysosome transport through different protein-protein interaction cascades. Also plays a central role in growth-factor-mediated cell signaling, nutrient-transporter-mediated nutrient uptake, neurotrophin transport in the axons of neurons and lipid metabolism. Also involved in regulation of some specialized endosomal membrane trafficking, such as maturation of melanosomes, pathogen-induced phagosomes (or vacuoles) and autophagosomes. Plays a role in the maturation and acidification of phagosomes that engulf pathogens, such as S.aureus and Mycobacteria. Plays a role in the fusion of phagosomes with lysosomes. In concert with RAC1, plays a role in regulating the formation of RBs (ruffled borders) in osteoclasts. Controls the endosomal trafficking and neurite outgrowth signaling of NTRK1/TRKA. Regulates the endocytic trafficking of the EGF-EGFR complex by regulating its lysosomal degradation. Involved in the ADRB2-stimulated lipolysis through lipophagy, a cytosolic lipase-independent autophagic pathway. Required for the exosomal release of SDCBP, CD63 and syndecan. Required for vesicular trafficking and cell surface expression of ACE2. May play a role in PRPH neuronal intermediate filament assembly. This chain is Ras-related protein Rab-7a, found in Mus musculus (Mouse).